A 254-amino-acid polypeptide reads, in one-letter code: Mamu class II histocompatibility antigen, DR alpha chain (254 aa).

Residues 1–25 (MAESGVPVLGFFIIAVLMSAQESWA) form the signal peptide. The tract at residues 26–109 (IKEEHVIIQA…KRSNNTPITN (84 aa)) is alpha-1. At 26–216 (IKEEHVIIQA…APSPLPETTE (191 aa)) the chain is on the extracellular side. The N-linked (GlcNAc...) asparagine glycan is linked to Asn103. The tract at residues 110–203 (VPPEVTVLTN…CLDAPLLKHW (94 aa)) is alpha-2. Residues 112-204 (PEVTVLTNSP…LDAPLLKHWE (93 aa)) form the Ig-like C1-type domain. Cysteines 132 and 188 form a disulfide. Residues 204–216 (EFDAPSPLPETTE) are connecting peptide. A helical membrane pass occupies residues 217–239 (NVVCALGLIVGLVGIIVGTVFII). Residues 240–254 (KGVRKSNAAERRGPL) are Cytoplasmic-facing. A Glycyl lysine isopeptide (Lys-Gly) (interchain with G-Cter in ubiquitin) cross-link involves residue Lys244.

Belongs to the MHC class II family. As to quaternary structure, heterodimer of an alpha chain and a beta chain.

It localises to the membrane. The sequence is that of Mamu class II histocompatibility antigen, DR alpha chain (Mamu-DRA) from Macaca mulatta (Rhesus macaque).